A 155-amino-acid chain; its full sequence is 17.3 kDa class II heat shock protein (155 aa).

In terms of domain architecture, sHSP spans 39-155; sequence DAKAMAATPA…KPKTIEVKVA (117 aa).

It belongs to the small heat shock protein (HSP20) family.

The protein resides in the cytoplasm. The chain is 17.3 kDa class II heat shock protein from Solanum peruvianum (Peruvian tomato).